The sequence spans 2346 residues: Acetyl-CoA carboxylase 1 (2346 aa).

Methionine 1 is modified (N-acetylmethionine). Phosphoserine occurs at positions 5, 23, 25, 29, 34, 48, 50, and 53. Threonine 58 bears the Phosphothreonine mark. Serine 78 is subject to Phosphoserine. Serine 80 bears the Phosphoserine; by AMPK mark. The Biotin carboxylation domain maps to 117–618 (VIEKVLIANN…DTGWLDRLIA (502 aa)). The ATP-grasp domain maps to 275 to 466 (SKRILNVPQE…LPAAQLQIAM (192 aa)). ATP is bound at residue 315–320 (GGGGKG). Positions 424, 437, and 439 each coordinate Mg(2+). Mn(2+) contacts are provided by glutamate 424, glutamate 437, and asparagine 439. Residue arginine 441 is part of the active site. Position 610 is a phosphothreonine (threonine 610). The Biotinyl-binding domain occupies 745-819 (FEKENDPSVL…DPGCVIAKMQ (75 aa)). N6-biotinyllysine is present on lysine 786. A phosphoserine mark is found at serine 835, serine 1201, serine 1216, and serine 1218. The residue at position 1227 (threonine 1227) is a Phosphothreonine. Serine 1259, serine 1263, and serine 1273 each carry phosphoserine. Lysine 1334 carries the post-translational modification N6-acetyllysine. In terms of domain architecture, CoA carboxyltransferase N-terminal spans 1576–1914 (PYVTKDLLQS…SVYSSVPLLN (339 aa)). The interval 1576 to 2234 (PYVTKDLLQS…EDLVKKKIHN (659 aa)) is carboxyltransferase. Residues arginine 1823, lysine 2127, and arginine 2129 each contribute to the CoA site. The CoA carboxyltransferase C-terminal domain occupies 1918 to 2234 (PIDRVIEFVP…EDLVKKKIHN (317 aa)). At threonine 2153 the chain carries Phosphothreonine.

Monomer, homodimer, and homotetramer. Can form filamentous polymers. Interacts in its inactive phosphorylated form with the BRCT domains of BRCA1 which prevents ACACA dephosphorylation and inhibits lipid synthesis. Interacts with MID1IP1; interaction with MID1IP1 promotes oligomerization and increases its activity. Mg(2+) serves as cofactor. The cofactor is Mn(2+). It depends on biotin as a cofactor. In terms of processing, phosphorylation on Ser-1263 is required for interaction with BRCA1. Post-translationally, phosphorylation at Ser-80 by AMPK inactivates enzyme activity. The biotin cofactor is covalently attached to the central biotinyl-binding domain and is required for the catalytic activity. As to expression, expressed at high levels in mammary gland.

It is found in the cytoplasm. The protein localises to the cytosol. It catalyses the reaction hydrogencarbonate + acetyl-CoA + ATP = malonyl-CoA + ADP + phosphate + H(+). The protein operates within lipid metabolism; malonyl-CoA biosynthesis; malonyl-CoA from acetyl-CoA: step 1/1. With respect to regulation, inhibited by phosphorylation. Citrate promotes oligomerization of the protein into filaments that correspond to the most active form of the carboxylase. In terms of biological role, cytosolic enzyme that catalyzes the carboxylation of acetyl-CoA to malonyl-CoA, the first and rate-limiting step of de novo fatty acid biosynthesis. This is a 2 steps reaction starting with the ATP-dependent carboxylation of the biotin carried by the biotin carboxyl carrier (BCC) domain followed by the transfer of the carboxyl group from carboxylated biotin to acetyl-CoA. This is Acetyl-CoA carboxylase 1 from Ovis aries (Sheep).